Consider the following 299-residue polypeptide: Type II restriction enzyme BglI (299 aa).

Mg(2+)-binding residues include Asp116, Asp142, and Ile143.

Homodimer. Mg(2+) serves as cofactor.

It carries out the reaction Endonucleolytic cleavage of DNA to give specific double-stranded fragments with terminal 5'-phosphates.. In terms of biological role, a P subtype restriction enzyme that recognizes the double-stranded sequence 5'-GCCNNNNNGGC-3' and cleaves before N-8. The chain is Type II restriction enzyme BglI (bglIR) from Bacillus subtilis.